The sequence spans 501 residues: Raftlin-2 (501 aa).

Disordered regions lie at residues 1-20 and 196-239; these read MGCG…GKIF and SWNE…RKGE. Residue Gly2 is the site of N-myristoyl glycine attachment. The S-palmitoyl cysteine moiety is linked to residue Cys3. Polar residues predominate over residues 220 to 233; it reads GQYQMEQNGSPTSS. Ser405 bears the Phosphoserine mark. The interval 407–449 is disordered; the sequence is AQTPDKKASRHIKGEDKNKATSRSIGLDTTSSQPAESRHLPEE. Thr409 is modified (phosphothreonine). Basic and acidic residues predominate over residues 410–425; that stretch reads PDKKASRHIKGEDKNK. The segment covering 427 to 441 has biased composition (polar residues); that stretch reads TSRSIGLDTTSSQPA. The residue at position 430 (Ser430) is a Phosphoserine.

It belongs to the raftlin family.

The protein localises to the cell membrane. In terms of biological role, upon bacterial lipopolysaccharide stimulation, mediates clathrin-dependent internalization of TLR4 in dendritic cells, resulting in activation of TICAM1-mediated signaling and subsequent IFNB1 production. May regulate B-cell antigen receptor-mediated signaling. The protein is Raftlin-2 (RFTN2) of Homo sapiens (Human).